Consider the following 283-residue polypeptide: Elongation factor Ts (283 aa).

Residues 80-83 (TDFV) are involved in Mg(2+) ion dislocation from EF-Tu.

It belongs to the EF-Ts family.

The protein resides in the cytoplasm. Functionally, associates with the EF-Tu.GDP complex and induces the exchange of GDP to GTP. It remains bound to the aminoacyl-tRNA.EF-Tu.GTP complex up to the GTP hydrolysis stage on the ribosome. This Salmonella gallinarum (strain 287/91 / NCTC 13346) protein is Elongation factor Ts.